The primary structure comprises 176 residues: Orotate phosphoribosyltransferase (176 aa).

5-phospho-alpha-D-ribose 1-diphosphate contacts are provided by residues Arg-90, Lys-91, Lys-94, and 116 to 124; that span reads EDVTTTGGS. Orotate-binding residues include Thr-120 and Arg-148.

The protein belongs to the purine/pyrimidine phosphoribosyltransferase family. PyrE subfamily. Homodimer. Requires Mg(2+) as cofactor.

The catalysed reaction is orotidine 5'-phosphate + diphosphate = orotate + 5-phospho-alpha-D-ribose 1-diphosphate. It functions in the pathway pyrimidine metabolism; UMP biosynthesis via de novo pathway; UMP from orotate: step 1/2. Catalyzes the transfer of a ribosyl phosphate group from 5-phosphoribose 1-diphosphate to orotate, leading to the formation of orotidine monophosphate (OMP). This Methanocaldococcus jannaschii (strain ATCC 43067 / DSM 2661 / JAL-1 / JCM 10045 / NBRC 100440) (Methanococcus jannaschii) protein is Orotate phosphoribosyltransferase.